We begin with the raw amino-acid sequence, 253 residues long: Large ribosomal subunit protein uL1m (253 aa).

Residues 1 to 81 (MSSLIALGKR…SIALKSNRRA (81 aa)) constitute a mitochondrion transit peptide.

It belongs to the universal ribosomal protein uL1 family. Component of the mitochondrial large ribosomal subunit (mt-LSU). Mature yeast 74S mitochondrial ribosomes consist of a small (37S) and a large (54S) subunit. The 37S small subunit contains a 15S ribosomal RNA (15S mt-rRNA) and at least 32 different proteins. The 54S large subunit contains a 21S rRNA (21S mt-rRNA) and at least 45 different proteins.

It is found in the mitochondrion. Functionally, component of the mitochondrial ribosome (mitoribosome), a dedicated translation machinery responsible for the synthesis of mitochondrial genome-encoded proteins, including at least some of the essential transmembrane subunits of the mitochondrial respiratory chain. The mitoribosomes are attached to the mitochondrial inner membrane and translation products are cotranslationally integrated into the membrane. This chain is Large ribosomal subunit protein uL1m (mrpl1), found in Schizosaccharomyces pombe (strain 972 / ATCC 24843) (Fission yeast).